The sequence spans 116 residues: Mercuric transport protein MerT (116 aa).

The next 2 helical transmembrane spans lie at 16-36 (LAAI…ALGF) and 46-66 (VLEP…FFAW). Cysteine 24 and cysteine 25 together coordinate Hg(2+). 2 residues coordinate Hg(2+): cysteine 76 and cysteine 82. The chain crosses the membrane as a helical span at residues 94 to 114 (IFWFVAVLVLVALGFPYVMPF).

It belongs to the MerT family.

Its subcellular location is the cell inner membrane. Involved in mercury resistance. Probably transfers a mercuric ion from the periplasmic Hg(2+)-binding protein MerP to the cytoplasmic mercuric reductase MerA. The polypeptide is Mercuric transport protein MerT (Acinetobacter calcoaceticus).